The sequence spans 672 residues: Beta-galactosidase BgaB (672 aa).

Arg109 is a binding site for substrate. Cys113 lines the Zn(2+) pocket. Asn147 is a substrate binding site. Catalysis depends on Glu148, which acts as the Proton donor. Zn(2+) contacts are provided by Cys156, Cys158, and Cys161. The Nucleophile role is filled by Glu303. Residues Trp311 and 351 to 354 contribute to the substrate site; that span reads EKFH.

The protein belongs to the glycosyl hydrolase 42 family.

The catalysed reaction is Hydrolysis of terminal non-reducing beta-D-galactose residues in beta-D-galactosides.. In Geobacillus sp. (strain Y412MC61), this protein is Beta-galactosidase BgaB.